We begin with the raw amino-acid sequence, 195 residues long: Imidazoleglycerol-phosphate dehydratase (195 aa).

It belongs to the imidazoleglycerol-phosphate dehydratase family.

It is found in the cytoplasm. The enzyme catalyses D-erythro-1-(imidazol-4-yl)glycerol 3-phosphate = 3-(imidazol-4-yl)-2-oxopropyl phosphate + H2O. Its pathway is amino-acid biosynthesis; L-histidine biosynthesis; L-histidine from 5-phospho-alpha-D-ribose 1-diphosphate: step 6/9. In Cereibacter sphaeroides (strain ATCC 17023 / DSM 158 / JCM 6121 / CCUG 31486 / LMG 2827 / NBRC 12203 / NCIMB 8253 / ATH 2.4.1.) (Rhodobacter sphaeroides), this protein is Imidazoleglycerol-phosphate dehydratase.